An 80-amino-acid polypeptide reads, in one-letter code: CLAVATA3/ESR (CLE)-related protein 4 (80 aa).

An N-terminal signal peptide occupies residues 1–22 (MASFKLWVCLILLLLEFSVHQC). A disordered region spans residues 55–80 (SKDGQTVLGTLDSKRLSPGGPDPRHH). 2 positions are modified to hydroxyproline: proline 72 and proline 75. The O-linked (Ara...) hydroxyproline glycan is linked to proline 75.

The protein belongs to the CLV3/ESR signal peptide family. The O-glycosylation (arabinosylation) of the hydroxyproline Pro-75 enhances binding affinity of the CLE4p peptide for its receptor. Expressed in roots and seedlings.

It localises to the secreted. The protein resides in the extracellular space. Functionally, extracellular signal peptide that regulates cell fate. The sequence is that of CLAVATA3/ESR (CLE)-related protein 4 from Arabidopsis thaliana (Mouse-ear cress).